The chain runs to 193 residues: Xanthine phosphoribosyltransferase (193 aa).

Residues Leu-20 and Asn-27 each coordinate xanthine. 128-132 (ANGEA) serves as a coordination point for 5-phospho-alpha-D-ribose 1-diphosphate. Lys-156 provides a ligand contact to xanthine.

It belongs to the purine/pyrimidine phosphoribosyltransferase family. Xpt subfamily. As to quaternary structure, homodimer.

It localises to the cytoplasm. It carries out the reaction XMP + diphosphate = xanthine + 5-phospho-alpha-D-ribose 1-diphosphate. Its pathway is purine metabolism; XMP biosynthesis via salvage pathway; XMP from xanthine: step 1/1. Converts the preformed base xanthine, a product of nucleic acid breakdown, to xanthosine 5'-monophosphate (XMP), so it can be reused for RNA or DNA synthesis. This chain is Xanthine phosphoribosyltransferase, found in Exiguobacterium sp. (strain ATCC BAA-1283 / AT1b).